Here is a 322-residue protein sequence, read N- to C-terminus: Lipoyl synthase (322 aa).

Positions 69, 74, 80, 95, 99, 102, and 309 each coordinate [4Fe-4S] cluster. Positions F81–T298 constitute a Radical SAM core domain.

It belongs to the radical SAM superfamily. Lipoyl synthase family. It depends on [4Fe-4S] cluster as a cofactor.

The protein localises to the cytoplasm. It catalyses the reaction [[Fe-S] cluster scaffold protein carrying a second [4Fe-4S](2+) cluster] + N(6)-octanoyl-L-lysyl-[protein] + 2 oxidized [2Fe-2S]-[ferredoxin] + 2 S-adenosyl-L-methionine + 4 H(+) = [[Fe-S] cluster scaffold protein] + N(6)-[(R)-dihydrolipoyl]-L-lysyl-[protein] + 4 Fe(3+) + 2 hydrogen sulfide + 2 5'-deoxyadenosine + 2 L-methionine + 2 reduced [2Fe-2S]-[ferredoxin]. It participates in protein modification; protein lipoylation via endogenous pathway; protein N(6)-(lipoyl)lysine from octanoyl-[acyl-carrier-protein]: step 2/2. Functionally, catalyzes the radical-mediated insertion of two sulfur atoms into the C-6 and C-8 positions of the octanoyl moiety bound to the lipoyl domains of lipoate-dependent enzymes, thereby converting the octanoylated domains into lipoylated derivatives. The protein is Lipoyl synthase of Photobacterium profundum (strain SS9).